Reading from the N-terminus, the 873-residue chain is Tyrosine-protein kinase transforming protein Fps (873 aa).

Residues 1–46 (ASGQLHRPQPQEHTSTSAAAGTWRLTQASESRHRLPHCSAAPSHQD) are disordered. Residues 11-29 (QEHTSTSAAAGTWRLTQAS) are compositionally biased toward polar residues. The region spanning 50 to 313 (MGFGPELWCP…AVEMIDPATE (264 aa)) is the F-BAR domain. The tract at residues 445-471 (GSEEPPPALPLQEDRQSARSTDQERSG) is disordered. Basic and acidic residues predominate over residues 456–469 (QEDRQSARSTDQER). The SH2 domain occupies 511 to 600 (WYHGAIPRSE…KSGIVLTRAV (90 aa)). A Protein kinase domain is found at 612–865 (VLLGERIGRG…PSFGAVHQDL (254 aa)). Residues 618–626 (IGRGNFGEV) and K641 contribute to the ATP site. The active-site Proton acceptor is the D734. Residue Y764 is modified to Phosphotyrosine; by autocatalysis.

Belongs to the protein kinase superfamily. Tyr protein kinase family. Fes/fps subfamily.

It catalyses the reaction L-tyrosyl-[protein] + ATP = O-phospho-L-tyrosyl-[protein] + ADP + H(+). The sequence is that of Tyrosine-protein kinase transforming protein Fps (V-FPS) from Gallus gallus (Chicken).